A 497-amino-acid chain; its full sequence is Low affinity K(+) transporter 1 (497 aa).

At 1 to 29 (MFNHDWKYSINSKTFADLNIELFRNHKFK) the chain is on the extracellular side. The chain crosses the membrane as a helical span at residues 30–50 (TVLNYIIGVVGWNGLKLALFV). At 51–80 (SDIYTCIKLLAFNSWSNNIIKPYLPFKISK) the chain is on the cytoplasmic side. The helical transmembrane segment at 81–101 (WLFSGCILASIVLLIWEAIAG) threads the bilayer. The Extracellular segment spans residues 102–216 (MRIYKTGNIS…TNHEEAVILS (115 aa)). The helical transmembrane segment at 217-237 (LMLFSFIIWALFVFKFLLAVI) threads the bilayer. At 238–497 (CSIFVYYKII…EDEDRTYNYT (260 aa)) the chain is on the cytoplasmic side. S291 and S319 each carry phosphoserine. The interval 420–469 (EFHGPLDSMPNTTNNIRNFNSNSSRPRPPPLQTKSSINSKADSNDNGRIY) is disordered. Over residues 429–444 (PNTTNNIRNFNSNSSR) the composition is skewed to low complexity. Over residues 451-465 (QTKSSINSKADSNDN) the composition is skewed to polar residues.

This sequence belongs to the KCH1 low affinity K(+) transporter family.

It localises to the vacuole membrane. Its subcellular location is the cell membrane. The catalysed reaction is K(+)(in) = K(+)(out). Low affinity potassium transporter that, with PRM6/KCH2, participates in high-affinity Ca(2+) influx system (HACS) activation during the response to mating pheromone. Directly promotes K(+) influx and HACS may electrochemically respond to this K(+) influx. KCH1 and KCH2 act at the apex of the calcium signaling pathway that is used for survival during prolonged exposures to mating pheromones. This chain is Low affinity K(+) transporter 1, found in Saccharomyces cerevisiae (strain ATCC 204508 / S288c) (Baker's yeast).